The chain runs to 500 residues: Guanosine-5'-triphosphate,3'-diphosphate pyrophosphatase (500 aa).

The protein belongs to the GppA/Ppx family. GppA subfamily.

The enzyme catalyses guanosine 3'-diphosphate 5'-triphosphate + H2O = guanosine 3',5'-bis(diphosphate) + phosphate + H(+). The protein operates within purine metabolism; ppGpp biosynthesis; ppGpp from GTP: step 2/2. Functionally, catalyzes the conversion of pppGpp to ppGpp. Guanosine pentaphosphate (pppGpp) is a cytoplasmic signaling molecule which together with ppGpp controls the 'stringent response', an adaptive process that allows bacteria to respond to amino acid starvation, resulting in the coordinated regulation of numerous cellular activities. In Photorhabdus laumondii subsp. laumondii (strain DSM 15139 / CIP 105565 / TT01) (Photorhabdus luminescens subsp. laumondii), this protein is Guanosine-5'-triphosphate,3'-diphosphate pyrophosphatase.